The chain runs to 271 residues: Cytosolic Fe-S cluster assembly factor NUBP2 (271 aa).

M1 bears the N-acetylmethionine mark. 22 to 29 (GKGGVGKS) provides a ligand contact to ATP. C196 and C199 together coordinate [4Fe-4S] cluster.

It belongs to the Mrp/NBP35 ATP-binding proteins family. NUBP2/CFD1 subfamily. As to quaternary structure, heterotetramer of 2 NUBP1 and 2 NUBP2 chains. Interacts with KIFC1. Interacts with NUBP1. [4Fe-4S] cluster serves as cofactor. As to expression, widely expressed with highest expression in skeletal muscle.

It localises to the nucleus. Its subcellular location is the cytoplasm. The protein resides in the cytoskeleton. The protein localises to the microtubule organizing center. It is found in the centrosome. It localises to the cilium axoneme. Its subcellular location is the centriole. Component of the cytosolic iron-sulfur (Fe/S) protein assembly (CIA) machinery. Required for maturation of extramitochondrial Fe-S proteins. The NUBP1-NUBP2 heterotetramer forms a Fe-S scaffold complex, mediating the de novo assembly of an Fe-S cluster and its transfer to target apoproteins. Negatively regulates cilium formation and structure. The sequence is that of Cytosolic Fe-S cluster assembly factor NUBP2 from Homo sapiens (Human).